A 91-amino-acid polypeptide reads, in one-letter code: Cell division topological specificity factor (91 aa).

The protein belongs to the MinE family.

Functionally, prevents the cell division inhibition by proteins MinC and MinD at internal division sites while permitting inhibition at polar sites. This ensures cell division at the proper site by restricting the formation of a division septum at the midpoint of the long axis of the cell. In Bradyrhizobium diazoefficiens (strain JCM 10833 / BCRC 13528 / IAM 13628 / NBRC 14792 / USDA 110), this protein is Cell division topological specificity factor.